Here is a 405-residue protein sequence, read N- to C-terminus: Glucose-1-phosphate adenylyltransferase (405 aa).

Residues Tyr96, Gly161, 176 to 177 (EK), and Ser194 each bind alpha-D-glucose 1-phosphate.

It belongs to the bacterial/plant glucose-1-phosphate adenylyltransferase family. As to quaternary structure, homotetramer.

It catalyses the reaction alpha-D-glucose 1-phosphate + ATP + H(+) = ADP-alpha-D-glucose + diphosphate. Its pathway is glycan biosynthesis; glycogen biosynthesis. In terms of biological role, involved in the biosynthesis of ADP-glucose, a building block required for the elongation reactions to produce glycogen. Catalyzes the reaction between ATP and alpha-D-glucose 1-phosphate (G1P) to produce pyrophosphate and ADP-Glc. In Photobacterium profundum (strain SS9), this protein is Glucose-1-phosphate adenylyltransferase.